We begin with the raw amino-acid sequence, 1049 residues long: Multiple C2 domain and transmembrane region protein 16 (1049 aa).

A C2 1 domain is found at 1 to 112; the sequence is MATTRKLVVE…VGQGEEALIY (112 aa). Residues 136–249 form a disordered region; the sequence is DEKPPPLKPT…PPQNQPDGED (114 aa). Basic and acidic residues-rich tracts occupy residues 153–170 and 226–238; these read VEEK…ESKP and ESDK…KPVE. 3 consecutive C2 domains span residues 302–426, 460–582, and 617–745; these read TSEI…PQWY, TAGN…SRWL, and VCSD…RNTY. 4 residues coordinate Ca(2+): Ser338, Asp390, Thr393, and Ser398. 2 helical membrane-spanning segments follow: residues 883–903 and 989–1009; these read VMLI…LFVI and ATGI…LVPT.

Belongs to the MCTP family. Ca(2+) is required as a cofactor. Expressed in the vascular tissues of roots, cotyledons and rosette leaves. Accumulates in roots meristems and shoot apical meristems (SAMs). Observed in flowers.

It localises to the endoplasmic reticulum membrane. Functionally, may function as a signaling molecule by regulating the trafficking of other regulators. The chain is Multiple C2 domain and transmembrane region protein 16 from Arabidopsis thaliana (Mouse-ear cress).